Here is a 204-residue protein sequence, read N- to C-terminus: Thiamine-phosphate synthase (204 aa).

4-amino-2-methyl-5-(diphosphooxymethyl)pyrimidine-binding positions include 35–39 and Asn-67; that span reads QVREK. Mg(2+) contacts are provided by Asp-68 and Asp-87. Ser-106 contributes to the 4-amino-2-methyl-5-(diphosphooxymethyl)pyrimidine binding site. 132-134 serves as a coordination point for 2-[(2R,5Z)-2-carboxy-4-methylthiazol-5(2H)-ylidene]ethyl phosphate; that stretch reads TPT. Lys-135 contacts 4-amino-2-methyl-5-(diphosphooxymethyl)pyrimidine. 2-[(2R,5Z)-2-carboxy-4-methylthiazol-5(2H)-ylidene]ethyl phosphate is bound by residues Gly-163 and 183–184; that span reads VS.

This sequence belongs to the thiamine-phosphate synthase family. It depends on Mg(2+) as a cofactor.

It catalyses the reaction 2-[(2R,5Z)-2-carboxy-4-methylthiazol-5(2H)-ylidene]ethyl phosphate + 4-amino-2-methyl-5-(diphosphooxymethyl)pyrimidine + 2 H(+) = thiamine phosphate + CO2 + diphosphate. The enzyme catalyses 2-(2-carboxy-4-methylthiazol-5-yl)ethyl phosphate + 4-amino-2-methyl-5-(diphosphooxymethyl)pyrimidine + 2 H(+) = thiamine phosphate + CO2 + diphosphate. It carries out the reaction 4-methyl-5-(2-phosphooxyethyl)-thiazole + 4-amino-2-methyl-5-(diphosphooxymethyl)pyrimidine + H(+) = thiamine phosphate + diphosphate. Its pathway is cofactor biosynthesis; thiamine diphosphate biosynthesis; thiamine phosphate from 4-amino-2-methyl-5-diphosphomethylpyrimidine and 4-methyl-5-(2-phosphoethyl)-thiazole: step 1/1. Its function is as follows. Condenses 4-methyl-5-(beta-hydroxyethyl)thiazole monophosphate (THZ-P) and 2-methyl-4-amino-5-hydroxymethyl pyrimidine pyrophosphate (HMP-PP) to form thiamine monophosphate (TMP). This Vibrio parahaemolyticus serotype O3:K6 (strain RIMD 2210633) protein is Thiamine-phosphate synthase.